The sequence spans 368 residues: Chorismate synthase (368 aa).

Residues Arg-48 and Arg-54 each coordinate NADP(+). Residues 131 to 133 (RSS), 243 to 244 (NA), Gly-292, 307 to 311 (KPTSS), and Arg-333 each bind FMN.

The protein belongs to the chorismate synthase family. Homotetramer. FMNH2 serves as cofactor.

It catalyses the reaction 5-O-(1-carboxyvinyl)-3-phosphoshikimate = chorismate + phosphate. The protein operates within metabolic intermediate biosynthesis; chorismate biosynthesis; chorismate from D-erythrose 4-phosphate and phosphoenolpyruvate: step 7/7. Catalyzes the anti-1,4-elimination of the C-3 phosphate and the C-6 proR hydrogen from 5-enolpyruvylshikimate-3-phosphate (EPSP) to yield chorismate, which is the branch point compound that serves as the starting substrate for the three terminal pathways of aromatic amino acid biosynthesis. This reaction introduces a second double bond into the aromatic ring system. This chain is Chorismate synthase, found in Nitrobacter winogradskyi (strain ATCC 25391 / DSM 10237 / CIP 104748 / NCIMB 11846 / Nb-255).